A 371-amino-acid polypeptide reads, in one-letter code: Leucine-rich repeat-containing protein 2 (371 aa).

9 LRR repeats span residues 122-143 (HLREWYISNTLIQIIPTYIQLF), 145-166 (AMRILDLPKNQISHLPAEIGCL), 168-189 (NLKELNVGFNYLKSIPPELGDC), 191-214 (NLERLDCSGNLELMELPFELSNLK), 215-235 (QVTFVDISANKFSSVPICVLR), 238-260 (NLQWLDISSNNLTDLPQDIDRLE), 261-283 (ELQSFLLYKNKLTYLPYSMLNLK), 284-305 (KLTLLVVSGDHLVELPTALCDS), and 308-329 (PLKFVSLMDNPIDNAQCEDGNE).

The sequence is that of Leucine-rich repeat-containing protein 2 (LRRC2) from Homo sapiens (Human).